A 470-amino-acid chain; its full sequence is Zinc finger and BTB domain-containing protein 8A.1-A (470 aa).

The BTB domain maps to 24 to 92 (CDCHIIVEGQ…VYSGKLPLSG (69 aa)). Positions 260–280 (EDEDAASHSWPESPQQESLDQ) are disordered. The segment covering 269-278 (WPESPQQESL) has biased composition (polar residues). C2H2-type zinc fingers lie at residues 316 to 338 (FKCP…LRCH) and 344 to 367 (YPCE…QTIH). Residues 439–450 (GRKENGSERAES) are compositionally biased toward basic and acidic residues. The disordered stretch occupies residues 439–470 (GRKENGSERAESDLAIQEVVDSEDDELKEKQD).

Its subcellular location is the nucleus. Its function is as follows. May be involved in transcriptional regulation. This chain is Zinc finger and BTB domain-containing protein 8A.1-A (zbtb8a.1-a), found in Xenopus laevis (African clawed frog).